The primary structure comprises 304 residues: Aspartate carbamoyltransferase catalytic subunit (304 aa).

2 residues coordinate carbamoyl phosphate: Arg49 and Thr50. Lys77 serves as a coordination point for L-aspartate. Positions 99, 127, and 130 each coordinate carbamoyl phosphate. Arg160 and Arg211 together coordinate L-aspartate. Carbamoyl phosphate contacts are provided by Ala250 and Pro251.

This sequence belongs to the aspartate/ornithine carbamoyltransferase superfamily. ATCase family. As to quaternary structure, heterododecamer (2C3:3R2) of six catalytic PyrB chains organized as two trimers (C3), and six regulatory PyrI chains organized as three dimers (R2).

It carries out the reaction carbamoyl phosphate + L-aspartate = N-carbamoyl-L-aspartate + phosphate + H(+). The protein operates within pyrimidine metabolism; UMP biosynthesis via de novo pathway; (S)-dihydroorotate from bicarbonate: step 2/3. Its function is as follows. Catalyzes the condensation of carbamoyl phosphate and aspartate to form carbamoyl aspartate and inorganic phosphate, the committed step in the de novo pyrimidine nucleotide biosynthesis pathway. This chain is Aspartate carbamoyltransferase catalytic subunit, found in Bacillus velezensis (strain DSM 23117 / BGSC 10A6 / LMG 26770 / FZB42) (Bacillus amyloliquefaciens subsp. plantarum).